Here is a 581-residue protein sequence, read N- to C-terminus: Pentatricopeptide repeat-containing protein At3g56550 (581 aa).

PPR repeat units lie at residues 70-104 (STSD…SVSR), 106-140 (DLFT…GFLD), 141-171 (DAIV…MPVR), 172-206 (DLVS…GVCG), 207-241 (DSYT…RCES), 242-272 (CVFV…MRKR), 273-307 (DVLT…GVRP), 308-338 (NAIT…MSSQ), and 344-378 (NVKH…EDPV). A type E motif region spans residues 379-454 (LWRTLLGSCK…VPGWSWIEIG (76 aa)). Residues 455-485 (DQVHKFVVDDKMHPESAVIYSELGEVINRAI) form a type E(+) motif region. The tract at residues 486-581 (LAGYKPEDSN…DGICSCNDYW (96 aa)) is type DYW motif.

This sequence belongs to the PPR family. PCMP-H subfamily.

This Arabidopsis thaliana (Mouse-ear cress) protein is Pentatricopeptide repeat-containing protein At3g56550 (PCMP-H80).